A 1365-amino-acid chain; its full sequence is Serine/threonine-protein kinase LMTK1 (1365 aa).

Residues 32–52 form a helical membrane-spanning segment; the sequence is LAVVAVSFSGIFTVVILMLAC. Residues 126 to 396 form the Protein kinase domain; that stretch reads LLYLKEIGHG…PTAEEVHLLL (271 aa). ATP-binding positions include 132–140 and lysine 157; that span reads IGHGWFGKV. Aspartate 254 serves as the catalytic Proton acceptor. The residue at position 500 (serine 500) is a Phosphoserine. Disordered regions lie at residues 550–623, 638–698, 791–1186, 1237–1293, and 1343–1365; these read PDCA…LPAE, DDPL…GYVS, QEAE…PAVP, ESPT…EWDG, and ISDS…YTEA. The span at 560 to 575 shows a compositional bias: polar residues; that stretch reads QAVTDQDNNSEESTVA. Composition is skewed to low complexity over residues 638–655 and 675–686; these read DDPL…QPSP and SSNMSANNNSAS. Polar residues-rich tracts occupy residues 848 to 860 and 869 to 879; these read LESS…QEAP and EATSGVFTDLS. 2 stretches are compositionally biased toward low complexity: residues 904–918 and 981–993; these read PDSL…SASD and PLLS…LSKK. Positions 1015-1030 are enriched in basic and acidic residues; the sequence is PEKHSGIQDSQKEQDL. Serine 1035 is modified (phosphoserine). Residues 1037–1053 are compositionally biased toward polar residues; the sequence is GHQSVQAFPRSAVSSEV. Over residues 1072–1083 the composition is skewed to low complexity; it reads PLGAQGPVGVQP. Polar residues predominate over residues 1104–1132; it reads GSGTEPQGPSGQLSGRAQQGQMGNPSTPR. Positions 1150 to 1164 are enriched in acidic residues; it reads PEEDEDTEDSEESDE. Phosphothreonine is present on threonine 1156. Phosphoserine is present on residues serine 1159, serine 1162, serine 1175, serine 1178, and serine 1253. Positions 1354–1365 are enriched in gly residues; the sequence is PAAGAGGRYTEA.

Belongs to the protein kinase superfamily. Tyr protein kinase family. Interacts with CDK5. Autophosphorylated. Phosphorylated by CDK5. As to expression, expressed in brain, and, to a lower extent, in kidney, heart, lung and skeletal muscle. In the brain, expressed in the olfactory bulb, cerebellum, striatum, hippocampal formation, thalamus, hypothalamus, and pontine nuclei (at protein level).

It localises to the membrane. The protein localises to the cytoplasm. It is found in the perinuclear region. Its subcellular location is the cell projection. The protein resides in the dendrite. It localises to the axon. The protein localises to the growth cone. It carries out the reaction L-seryl-[protein] + ATP = O-phospho-L-seryl-[protein] + ADP + H(+). The enzyme catalyses L-threonyl-[protein] + ATP = O-phospho-L-threonyl-[protein] + ADP + H(+). In terms of biological role, may be involved in neuronal differentiation. This Mus musculus (Mouse) protein is Serine/threonine-protein kinase LMTK1 (Aatk).